The chain runs to 310 residues: NAD-dependent protein deacylase sirtuin-5, mitochondrial (310 aa).

The N-terminal 36 residues, 1-36, are a transit peptide targeting the mitochondrion; that stretch reads MQPLQIAPCRLLYGLYRGLKSPASTGTRICPAMARP. The 271-residue stretch at 37 to 307 folds into the Deacetylase sirtuin-type domain; it reads SSNMADFRKL…PEALAPHETG (271 aa). 58–77 serves as a coordination point for NAD(+); that stretch reads GAGVSAESGVPTFRGAGGYW. The substrate site is built by Tyr-102 and Arg-105. 140 to 143 lines the NAD(+) pocket; the sequence is QNID. Catalysis depends on His-158, which acts as the Proton acceptor. Zn(2+) contacts are provided by Cys-166, Cys-169, Cys-207, and Cys-212. Residues 249 to 251, 275 to 277, and Cys-293 contribute to the NAD(+) site; these read GTS and NME.

The protein belongs to the sirtuin family. Class III subfamily. In terms of assembly, monomer. Homodimer. Interacts with CPS1. Interacts with PCCA. Zn(2+) is required as a cofactor.

Its subcellular location is the mitochondrion. The protein resides in the cytoplasm. The protein localises to the cytosol. It localises to the nucleus. It carries out the reaction N(6)-malonyl-L-lysyl-[protein] + NAD(+) + H2O = 2''-O-malonyl-ADP-D-ribose + nicotinamide + L-lysyl-[protein]. The enzyme catalyses N(6)-succinyl-L-lysyl-[protein] + NAD(+) + H2O = 2''-O-succinyl-ADP-D-ribose + nicotinamide + L-lysyl-[protein]. The catalysed reaction is N(6)-glutaryl-L-lysyl-[protein] + NAD(+) + H2O = 2''-O-glutaryl-ADP-D-ribose + nicotinamide + L-lysyl-[protein]. Functionally, NAD-dependent lysine demalonylase, desuccinylase and deglutarylase that specifically removes malonyl, succinyl and glutaryl groups on target proteins. Activates CPS1 and contributes to the regulation of blood ammonia levels during prolonged fasting: acts by mediating desuccinylation and deglutarylation of CPS1, thereby increasing CPS1 activity in response to elevated NAD levels during fasting. Activates SOD1 by mediating its desuccinylation, leading to reduced reactive oxygen species. Activates SHMT2 by mediating its desuccinylation. Modulates ketogenesis through the desuccinylation and activation of HMGCS2. Has weak NAD-dependent protein deacetylase activity; however this activity may not be physiologically relevant in vivo. Can deacetylate cytochrome c (CYCS) and a number of other proteins in vitro such as UOX. In Canis lupus familiaris (Dog), this protein is NAD-dependent protein deacylase sirtuin-5, mitochondrial.